We begin with the raw amino-acid sequence, 351 residues long: S-adenosylmethionine:tRNA ribosyltransferase-isomerase (351 aa).

Belongs to the QueA family. In terms of assembly, monomer.

It localises to the cytoplasm. The catalysed reaction is 7-aminomethyl-7-carbaguanosine(34) in tRNA + S-adenosyl-L-methionine = epoxyqueuosine(34) in tRNA + adenine + L-methionine + 2 H(+). Its pathway is tRNA modification; tRNA-queuosine biosynthesis. In terms of biological role, transfers and isomerizes the ribose moiety from AdoMet to the 7-aminomethyl group of 7-deazaguanine (preQ1-tRNA) to give epoxyqueuosine (oQ-tRNA). The polypeptide is S-adenosylmethionine:tRNA ribosyltransferase-isomerase (Hydrogenovibrio crunogenus (strain DSM 25203 / XCL-2) (Thiomicrospira crunogena)).